The sequence spans 413 residues: Ureide permease 5 (413 aa).

The Extracellular portion of the chain corresponds to 1-18 (MMIAQELGIYVVESKGGA). Residues 19–39 (ILCLLLSLLCLGTWPALMALL) traverse the membrane as a helical segment. Residues 40–50 (ERRGRLPQHTY) are Cytoplasmic-facing. Residues 51-71 (LDYSITNFLAAIFIAFVFGGI) form a helical membrane-spanning segment. Residues 72–91 (GESTHEAPSFITQLTQIQDN) are Extracellular-facing. Residues 92–112 (WPSVLFAMAGGVGLSIGNLAT) form a helical membrane-spanning segment. Residues 113-115 (QYS) are Cytoplasmic-facing. The chain crosses the membrane as a helical span at residues 116-136 (LAFVGLSVTEVTAASITVVVG). Residues 137–149 (TTVNYFLDNGLNR) lie on the Extracellular side of the membrane. Residues 150-170 (ADILFSGVGCFMVAVCLGSAV) form a helical membrane-spanning segment. Over 171–240 (HSSNSADIKA…RAIKVLGKSM (70 aa)) the chain is Cytoplasmic. Residue 232 to 239 (AIKVLGKS) participates in ATP binding. The chain crosses the membrane as a helical span at residues 241–261 (VVGLGITFFAGLSFSLFSPLF). Over 262 to 278 (NLATNDQWHTLKQGVPK) the chain is Extracellular. Residues 279 to 299 (LIVYTAFFYFSLSCFVIAVAL) form a helical membrane-spanning segment. The Cytoplasmic segment spans residues 300-326 (NISFLYKPVLDSPRSSFREYLSDWNGR). The helical transmembrane segment at 327-347 (GWALAAGLLCGFGNGLQFMGG) threads the bilayer. The Extracellular segment spans residues 348–352 (QAAGY). The chain crosses the membrane as a helical span at residues 353-373 (AASDAVQALPLVSTFWGIYLF). Residues 374 to 384 (GEYRRSSTRTY) are Cytoplasmic-facing. A helical membrane pass occupies residues 385-405 (ALLVGMLVMFTVAVGLLMASA). Topologically, residues 406 to 413 (GERETRFT) are extracellular.

Belongs to the plant ureide permease (TC 2.A.7.19) family. In terms of tissue distribution, expressed in lateral roots, rosette leaves, stems, stipules, flower stigma, pedicels and the connective tissue between pollen sacks.

Its subcellular location is the membrane. Proton-coupled transporter that transports a wide spectrum of oxo derivatives of heterocyclic nitrogen compounds, including allantoin, uric acid and xanthine, but not adenine. Mediates transport of uracil and 5-fluorouracil (a toxic uracil analog). Functionally, proton-coupled transporter that transports a wide spectrum of oxo derivatives of heterocyclic nitrogen compounds, including allantoin, xanthine and uracil. The sequence is that of Ureide permease 5 from Arabidopsis thaliana (Mouse-ear cress).